The sequence spans 484 residues: 3-isopropylmalate dehydratase large subunit (484 aa).

3 residues coordinate [4Fe-4S] cluster: Cys352, Cys412, and Cys415. The interval 463-484 is disordered; the sequence is TLSSPSDLDPAPASAAIRTDAA. The span at 464–478 shows a compositional bias: low complexity; the sequence is LSSPSDLDPAPASAA.

The protein belongs to the aconitase/IPM isomerase family. LeuC type 1 subfamily. Heterodimer of LeuC and LeuD. [4Fe-4S] cluster serves as cofactor.

It catalyses the reaction (2R,3S)-3-isopropylmalate = (2S)-2-isopropylmalate. Its pathway is amino-acid biosynthesis; L-leucine biosynthesis; L-leucine from 3-methyl-2-oxobutanoate: step 2/4. In terms of biological role, catalyzes the isomerization between 2-isopropylmalate and 3-isopropylmalate, via the formation of 2-isopropylmaleate. This is 3-isopropylmalate dehydratase large subunit from Pseudarthrobacter chlorophenolicus (strain ATCC 700700 / DSM 12829 / CIP 107037 / JCM 12360 / KCTC 9906 / NCIMB 13794 / A6) (Arthrobacter chlorophenolicus).